A 432-amino-acid polypeptide reads, in one-letter code: Ornithine decarboxylase (432 aa).

Lys98 is subject to N6-(pyridoxal phosphate)lysine. Pyridoxal 5'-phosphate is bound by residues Ser229, Gly266, and 296–299 (EPGR). 341–342 (FD) serves as a coordination point for substrate. Cys377 (proton donor; shared with dimeric partner) is an active-site residue. Asp378 is a binding site for substrate. Tyr407 serves as a coordination point for pyridoxal 5'-phosphate.

This sequence belongs to the Orn/Lys/Arg decarboxylase class-II family. In terms of assembly, homodimer. Only the dimer is catalytically active, as the active sites are constructed of residues from both monomers. It depends on pyridoxal 5'-phosphate as a cofactor.

The protein localises to the cytoplasm. It carries out the reaction L-ornithine + H(+) = putrescine + CO2. The protein operates within amine and polyamine biosynthesis; putrescine biosynthesis via L-ornithine pathway; putrescine from L-ornithine: step 1/1. Inhibited by antizyme (AZ) OAZ1 in response to polyamine levels. AZ inhibits the assembly of the functional homodimer by binding to ODC monomers and targeting them for ubiquitin-independent proteolytic destruction by the 26S proteasome. In terms of biological role, catalyzes the first and rate-limiting step of polyamine biosynthesis that converts ornithine into putrescine, which is the precursor for the polyamines, spermidine and spermine. Polyamines are essential for cell proliferation and are implicated in cellular processes, ranging from DNA replication to apoptosis. This is Ornithine decarboxylase (spe1) from Schizosaccharomyces pombe (strain 972 / ATCC 24843) (Fission yeast).